The sequence spans 150 residues: Putative pre-16S rRNA nuclease (150 aa).

Belongs to the YqgF nuclease family.

The protein localises to the cytoplasm. In terms of biological role, could be a nuclease involved in processing of the 5'-end of pre-16S rRNA. The sequence is that of Putative pre-16S rRNA nuclease from Syntrophus aciditrophicus (strain SB).